A 393-amino-acid polypeptide reads, in one-letter code: Prokineticin receptor 1 (393 aa).

Over 1-62 (METTVGALGE…TNSRTFFAAK (62 aa)) the chain is Extracellular. Asn-11 carries N-linked (GlcNAc...) asparagine glycosylation. Residues 63–83 (IVIGMALVGIMLVCGIGNFIF) traverse the membrane as a helical segment. Topologically, residues 84 to 98 (ITALARYKKLRNLTN) are cytoplasmic. A helical transmembrane segment spans residues 99–119 (LLIANLAISDFLVAIVCCPFE). The Extracellular segment spans residues 120 to 146 (MDYYVVRQLSWEHGHVLCASVNYLRTV). A disulfide bridge links Cys-137 with Cys-217. The helical transmembrane segment at 147–167 (SLYVSTNALLAIAIDRYLAIV) threads the bilayer. Residues 168 to 179 (HPLRPRMKCQTA) are Cytoplasmic-facing. The helical transmembrane segment at 180-200 (AGLIFLVWSVSILIAIPAAYF) threads the bilayer. Topologically, residues 201-232 (TTETVLVIVERQEKIFCGQIWPVDQQFYYRSY) are extracellular. Residues 233-253 (FLLVFGLEFVGPVVAMTLCYA) traverse the membrane as a helical segment. Residues 254 to 282 (RVSRELWFKAVPGFQTEQIRRRLRCRRRT) lie on the Cytoplasmic side of the membrane. Residues 283–303 (VLGLVCVLSAYVLCWAPFYGF) form a helical membrane-spanning segment. At 304 to 322 (TIVRDFFPSVFVKEKHYLT) the chain is on the extracellular side. The helical transmembrane segment at 323–343 (AFYVVECIAMSNSMINTLCFV) threads the bilayer. The Cytoplasmic portion of the chain corresponds to 344-393 (TVRNNTSKYLKRILRLQWRASPSGSKASADLDLRTTGIPATEEVDCIRLK).

This sequence belongs to the G-protein coupled receptor 1 family. As to expression, expressed at high levels in the heart, skeletal muscle and pancreas. Expressed at lower levels in the brain, lung, liver and kidney.

It is found in the cell membrane. Its function is as follows. Receptor for prokineticin 1. Exclusively coupled to the G(q) subclass of heteromeric G proteins. Activation leads to mobilization of calcium, stimulation of phosphoinositide turnover and activation of p44/p42 mitogen-activated protein kinase. May play a role during early pregnancy. The protein is Prokineticin receptor 1 (Prokr1) of Mus musculus (Mouse).